The primary structure comprises 1004 residues: Importin subunit beta-5 (1004 aa).

M1 carries the N-acetylmethionine modification. An Importin N-terminal domain is found at 21–100 (AETQLLQWCD…REVLLKLCLN (80 aa)).

It belongs to the importin beta family. In terms of assembly, interacts with NAP1.

The protein resides in the cytoplasm. It localises to the nucleus. The protein localises to the nuclear pore complex. In terms of biological role, required for nuclear protein import and mediates docking of import substrate to distinct nucleoporins. Serves a receptor for nuclear localization signals. Mediates the nuclear import of TATA-binding protein (TBP) and of histones H2A and H2B. In Saccharomyces cerevisiae (strain ATCC 204508 / S288c) (Baker's yeast), this protein is Importin subunit beta-5 (KAP114).